A 651-amino-acid polypeptide reads, in one-letter code: Peptide-N(4)-(N-acetyl-beta-glucosaminyl)asparagine amidase (651 aa).

N-acetylalanine is present on Ala-2. Residues 30-91 form the PUB domain; the sequence is EASKLLLTYA…EGETHLIFPK (62 aa). Residues 116–153 form a disordered region; that stretch reads SSQKVEFSQHPAAVRLPAEQPEDPTGLMQHSGNQPGQP. Residues 143 to 152 show a composition bias toward polar residues; it reads MQHSGNQPGQ. 4 residues coordinate Zn(2+): Cys-247, Cys-250, Cys-280, and Cys-283. The Nucleophile role is filled by Cys-306. Active-site residues include His-333 and Asp-350. A PAW domain is found at 451–651; it reads ELGGRVSGSL…LEIIITFSDL (201 aa).

This sequence belongs to the transglutaminase-like superfamily. PNGase family. Component of a complex required to couple retrotranslocation, ubiquitination and deglycosylation composed of NGLY1, SAKS1, AMFR, VCP and RAD23B. Interacts with the proteasome components RAD23B and PSMC1. Interacts with directly with VCP. Interacts with DERL1, bringing it close to the endoplasmic reticulum membrane. Interacts with SAKS1. It depends on Zn(2+) as a cofactor.

Its subcellular location is the cytoplasm. The catalysed reaction is Hydrolysis of an N(4)-(acetyl-beta-D-glucosaminyl)asparagine residue in which the glucosamine residue may be further glycosylated, to yield a (substituted) N-acetyl-beta-D-glucosaminylamine and a peptide containing an aspartate residue.. Its activity is regulated as follows. Inhibited by Z-VAD-fmk, a well-known caspase inhibitor, which inhibits enzyme activity through covalent binding of the carbohydrate to the single Cys-306 residue. In terms of biological role, specifically deglycosylates the denatured form of N-linked glycoproteins in the cytoplasm and assists their proteasome-mediated degradation. Cleaves the beta-aspartyl-glucosamine (GlcNAc) of the glycan and the amide side chain of Asn, converting Asn to Asp. Prefers proteins containing high-mannose over those bearing complex type oligosaccharides. Can recognize misfolded proteins in the endoplasmic reticulum that are exported to the cytosol to be destroyed and deglycosylate them, while it has no activity toward native proteins. Deglycosylation is a prerequisite for subsequent proteasome-mediated degradation of some, but not all, misfolded glycoproteins. This chain is Peptide-N(4)-(N-acetyl-beta-glucosaminyl)asparagine amidase (Ngly1), found in Rattus norvegicus (Rat).